Here is a 236-residue protein sequence, read N- to C-terminus: Small ribosomal subunit protein uS2c (236 aa).

This sequence belongs to the universal ribosomal protein uS2 family.

The protein localises to the plastid. It localises to the chloroplast. This Chloranthus spicatus (Chulantree) protein is Small ribosomal subunit protein uS2c (rps2).